Reading from the N-terminus, the 72-residue chain is UPF0346 protein EF_1680 (72 aa).

This sequence belongs to the UPF0346 family.

This is UPF0346 protein EF_1680 from Enterococcus faecalis (strain ATCC 700802 / V583).